Consider the following 176-residue polypeptide: Molybdopterin synthase catalytic subunit (176 aa).

Residues 36–38 (TVR), 102–103 (HR), Lys118, and 125–127 (KKE) each bind substrate.

This sequence belongs to the MoaE family. Heterotetramer of 2 MoaD subunits and 2 MoaE subunits. Also stable as homodimer. The enzyme changes between these two forms during catalysis.

The catalysed reaction is 2 [molybdopterin-synthase sulfur-carrier protein]-C-terminal-Gly-aminoethanethioate + cyclic pyranopterin phosphate + H2O = molybdopterin + 2 [molybdopterin-synthase sulfur-carrier protein]-C-terminal Gly-Gly + 2 H(+). The protein operates within cofactor biosynthesis; molybdopterin biosynthesis. Converts molybdopterin precursor Z into molybdopterin. This requires the incorporation of two sulfur atoms into precursor Z to generate a dithiolene group. The sulfur is provided by MoaD. The protein is Molybdopterin synthase catalytic subunit (moaE) of Ralstonia nicotianae (strain ATCC BAA-1114 / GMI1000) (Ralstonia solanacearum).